Here is a 235-residue protein sequence, read N- to C-terminus: Orotidine 5'-phosphate decarboxylase (235 aa).

Substrate-binding positions include D17, K39, 66–75, T121, R182, Q191, G211, and R212; that span reads DLKLHDIGNT. K68 (proton donor) is an active-site residue.

This sequence belongs to the OMP decarboxylase family. Type 1 subfamily. In terms of assembly, homodimer.

It carries out the reaction orotidine 5'-phosphate + H(+) = UMP + CO2. It participates in pyrimidine metabolism; UMP biosynthesis via de novo pathway; UMP from orotate: step 2/2. In terms of biological role, catalyzes the decarboxylation of orotidine 5'-monophosphate (OMP) to uridine 5'-monophosphate (UMP). The protein is Orotidine 5'-phosphate decarboxylase of Afipia carboxidovorans (strain ATCC 49405 / DSM 1227 / KCTC 32145 / OM5) (Oligotropha carboxidovorans).